A 379-amino-acid chain; its full sequence is 8-amino-7-oxononanoate synthase (379 aa).

2 residues coordinate substrate: Arg-27 and Arg-34. A pyridoxal 5'-phosphate-binding site is contributed by 114 to 115 (GY). His-139 contacts substrate. Pyridoxal 5'-phosphate is bound by residues Ser-187, 212-215 (DDAH), and 232-235 (TLSK). Residue Lys-235 is modified to N6-(pyridoxal phosphate)lysine. A substrate-binding site is contributed by Thr-344.

Belongs to the class-II pyridoxal-phosphate-dependent aminotransferase family. BioF subfamily. In terms of assembly, homodimer. It depends on pyridoxal 5'-phosphate as a cofactor.

The enzyme catalyses 6-carboxyhexanoyl-[ACP] + L-alanine + H(+) = (8S)-8-amino-7-oxononanoate + holo-[ACP] + CO2. It functions in the pathway cofactor biosynthesis; biotin biosynthesis. Functionally, catalyzes the decarboxylative condensation of pimeloyl-[acyl-carrier protein] and L-alanine to produce 8-amino-7-oxononanoate (AON), [acyl-carrier protein], and carbon dioxide. The protein is 8-amino-7-oxononanoate synthase of Methylobacterium nodulans (strain LMG 21967 / CNCM I-2342 / ORS 2060).